The sequence spans 433 residues: Cysteine--tRNA ligase (433 aa).

A Zn(2+)-binding site is contributed by cysteine 4. The short motif at 6–16 (PTVYDTAHIGN) is the 'HIGH' region element. Residues cysteine 188, histidine 213, and glutamate 217 each contribute to the Zn(2+) site. The 'KMSKS' region signature appears at 246–250 (KMSKS). Lysine 249 contributes to the ATP binding site.

This sequence belongs to the class-I aminoacyl-tRNA synthetase family. As to quaternary structure, monomer. Zn(2+) is required as a cofactor.

It localises to the cytoplasm. The enzyme catalyses tRNA(Cys) + L-cysteine + ATP = L-cysteinyl-tRNA(Cys) + AMP + diphosphate. The protein is Cysteine--tRNA ligase of Wolbachia sp. subsp. Brugia malayi (strain TRS).